The chain runs to 120 residues: Immunoglobulin kappa variable 2D-28 (120 aa).

An N-terminal signal peptide occupies residues 1-19 (MRLPAQLLGLLMLWVSGSS). An Ig-like domain is found at 20–120 (GDIVMTQSPL…YYCMQALQTP (101 aa)). The framework-1 stretch occupies residues 21–43 (DIVMTQSPLSLPVTPGEPASISC). A disulfide bridge links Cys43 with Cys113. The segment at 44 to 59 (RSSQSLLHSNGYNYLD) is complementarity-determining-1. The tract at residues 60–74 (WYLQKPGQSPQLLIY) is framework-2. A complementarity-determining-2 region spans residues 75-81 (LGSNRAS). The segment at 82-113 (GVPDRFSGSGSGTDFTLKISRVEAEDVGVYYC) is framework-3. Positions 114–120 (MQALQTP) are complementarity-determining-3.

Immunoglobulins are composed of two identical heavy chains and two identical light chains; disulfide-linked.

The protein localises to the secreted. Its subcellular location is the cell membrane. In terms of biological role, v region of the variable domain of immunoglobulin light chains that participates in the antigen recognition. Immunoglobulins, also known as antibodies, are membrane-bound or secreted glycoproteins produced by B lymphocytes. In the recognition phase of humoral immunity, the membrane-bound immunoglobulins serve as receptors which, upon binding of a specific antigen, trigger the clonal expansion and differentiation of B lymphocytes into immunoglobulins-secreting plasma cells. Secreted immunoglobulins mediate the effector phase of humoral immunity, which results in the elimination of bound antigens. The antigen binding site is formed by the variable domain of one heavy chain, together with that of its associated light chain. Thus, each immunoglobulin has two antigen binding sites with remarkable affinity for a particular antigen. The variable domains are assembled by a process called V-(D)-J rearrangement and can then be subjected to somatic hypermutations which, after exposure to antigen and selection, allow affinity maturation for a particular antigen. This chain is Immunoglobulin kappa variable 2D-28, found in Homo sapiens (Human).